We begin with the raw amino-acid sequence, 378 residues long: Long-chain-fatty-acid--luciferin-component ligase (378 aa).

Belongs to the LuxE family.

It carries out the reaction a long-chain fatty acid + L-cysteinyl-[protein] + ATP = an S-(long-chain fatty acyl)-L-cysteinyl-[protein] + AMP + diphosphate. Its pathway is lipid metabolism; fatty acid reduction for biolumincescence. Its function is as follows. Acyl-protein synthetase activates tetradecanoic acid. It is a component of the fatty acid reductase complex responsible for converting tetradecanoic acid to the aldehyde which serves as substrate in the luciferase-catalyzed reaction. The chain is Long-chain-fatty-acid--luciferin-component ligase from Aliivibrio fischeri (Vibrio fischeri).